A 684-amino-acid chain; its full sequence is Glycine--tRNA ligase beta subunit (684 aa).

The protein belongs to the class-II aminoacyl-tRNA synthetase family. In terms of assembly, tetramer of two alpha and two beta subunits.

Its subcellular location is the cytoplasm. The catalysed reaction is tRNA(Gly) + glycine + ATP = glycyl-tRNA(Gly) + AMP + diphosphate. The chain is Glycine--tRNA ligase beta subunit from Pseudomonas aeruginosa (strain LESB58).